The primary structure comprises 814 residues: Kexin (814 aa).

Positions 1-19 (MKVRKYITLCFWWAFSTSA) are cleaved as a signal peptide. Positions 20–109 (LVSSQQIPLK…LFPRNDLFKR (90 aa)) are excised as a propeptide. The N-linked (GlcNAc...) asparagine glycan is linked to Asn-42. The propeptide at 110–113 (LPVP) is removed by dipeptidylpeptidase STE13. Over 114–678 (APPMDSSLLP…KLSSPRQAMH (565 aa)) the chain is Lumenal. Asp-135 lines the Ca(2+) pocket. The region spanning 141 to 453 (QWHLVNPSFP…FGKIDAHKLI (313 aa)) is the Peptidase S8 domain. N-linked (GlcNAc...) asparagine glycosylation occurs at Asn-163. Asp-175 (charge relay system) is an active-site residue. Asp-184 contributes to the Ca(2+) binding site. Catalysis depends on His-213, which acts as the Charge relay system. Residues Asn-227, Asp-277, Asp-320, and Glu-350 each contribute to the Ca(2+) site. Disulfide bonds link Cys-230-Cys-377 and Cys-322-Cys-352. Ser-385 serves as the catalytic Charge relay system. N-linked (GlcNAc...) asparagine glycosylation is found at Asn-404 and Asn-480. Residues 462-596 (VNAQTWFYLP…RLKLFGESID (135 aa)) form the P/Homo B domain. Positions 651–671 (PQTTTASTDPDSDPNTPKKLS) are disordered. Over residues 653–667 (TTTASTDPDSDPNTP) the composition is skewed to low complexity. A helical transmembrane segment spans residues 679-699 (YFLTIFLIGATFLVLYFMFFM). Residues 700 to 814 (KSRRRIRRSR…PDVPPSSGRS (115 aa)) lie on the Cytoplasmic side of the membrane. The interval 756 to 814 (SLSSSENGDAEHTIDSVLTNENPFSDPIKQKFPNDANAESASNKLQELQPDVPPSSGRS) is disordered. A compositionally biased stretch (polar residues) spans 792–801 (NAESASNKLQ).

Belongs to the peptidase S8 family. Furin subfamily. Ca(2+) is required as a cofactor. Post-translationally, O-glycosylated.

It is found in the golgi apparatus. The protein resides in the trans-Golgi network membrane. It catalyses the reaction Cleavage of -Lys-Arg-|-Xaa- and -Arg-Arg-|-Xaa- bonds to process yeast alpha-factor pheromone and killer toxin precursors.. Functionally, processing of precursors of alpha-factors and killer toxin. The protein is Kexin (KEX2) of Saccharomyces cerevisiae (strain ATCC 204508 / S288c) (Baker's yeast).